The primary structure comprises 239 residues: MEGVMSEAPQSSIRKKEYEARMSRIRSRQEKEFRERKSANARYAEETTEKLLNKYYEQEREILEKKSSMKNGFYVPKEAEFFAVILIRSKCNCPPKVRKVLELFRLKRINTCVLVRNNKSTRKMLQIIKDHVAFGTIGMELLRKLVYTKGSGRNGHVRVKLTNEFIEDMFDGKIRCIEELVHHIYNGTEMFKKVNSFLYPFHLSPPRGGFKGQKSKSFNDGGSVGNHQDLLSNLLERMI.

The tract at residues Met-1–Met-22 is disordered.

This sequence belongs to the universal ribosomal protein uL30 family.

The protein is Large ribosomal subunit protein uL30 (RPL7) of Encephalitozoon cuniculi (strain GB-M1) (Microsporidian parasite).